Here is a 401-residue protein sequence, read N- to C-terminus: Imidazolonepropionase (401 aa).

Positions 70 and 72 each coordinate Fe(3+). Positions 70 and 72 each coordinate Zn(2+). 3 residues coordinate 4-imidazolone-5-propanoate: R79, Y142, and H175. Y142 is an N-formimidoyl-L-glutamate binding site. H240 is a binding site for Fe(3+). Residue H240 participates in Zn(2+) binding. A 4-imidazolone-5-propanoate-binding site is contributed by Q243. D315 serves as a coordination point for Fe(3+). D315 serves as a coordination point for Zn(2+). N-formimidoyl-L-glutamate contacts are provided by N317 and G319. T320 serves as a coordination point for 4-imidazolone-5-propanoate.

The protein belongs to the metallo-dependent hydrolases superfamily. HutI family. Requires Zn(2+) as cofactor. The cofactor is Fe(3+).

The protein localises to the cytoplasm. The catalysed reaction is 4-imidazolone-5-propanoate + H2O = N-formimidoyl-L-glutamate. It functions in the pathway amino-acid degradation; L-histidine degradation into L-glutamate; N-formimidoyl-L-glutamate from L-histidine: step 3/3. In terms of biological role, catalyzes the hydrolytic cleavage of the carbon-nitrogen bond in imidazolone-5-propanoate to yield N-formimidoyl-L-glutamate. It is the third step in the universal histidine degradation pathway. This chain is Imidazolonepropionase, found in Caulobacter sp. (strain K31).